Reading from the N-terminus, the 360-residue chain is Phospho-N-acetylmuramoyl-pentapeptide-transferase (360 aa).

The next 10 helical transmembrane spans lie at 25 to 45, 73 to 93, 97 to 117, 135 to 155, 170 to 190, 199 to 219, 236 to 256, 263 to 283, 288 to 308, and 338 to 358; these read RGILGVLTALTLSLCLGPWMI, TMGGALILSSIGISTLLWADL, YVWVVLLVTFLFGAIGWVDDY, FWQSVFGLCAAIFLYTTAPSA, IPLGIGFIVLTYFVIVGSSNA, GLAIMPTVMVGGALGIFCYLS, AGELIVFSGALIGAGLGFLWF, VFMGDVGALALGAALGTMAVI, MVLFIMGGVFVMETLSVVIQV, and VIVRFWIITVILVLIGLATLK.

This sequence belongs to the glycosyltransferase 4 family. MraY subfamily. It depends on Mg(2+) as a cofactor.

The protein resides in the cell inner membrane. The catalysed reaction is UDP-N-acetyl-alpha-D-muramoyl-L-alanyl-gamma-D-glutamyl-meso-2,6-diaminopimeloyl-D-alanyl-D-alanine + di-trans,octa-cis-undecaprenyl phosphate = di-trans,octa-cis-undecaprenyl diphospho-N-acetyl-alpha-D-muramoyl-L-alanyl-D-glutamyl-meso-2,6-diaminopimeloyl-D-alanyl-D-alanine + UMP. The protein operates within cell wall biogenesis; peptidoglycan biosynthesis. Functionally, catalyzes the initial step of the lipid cycle reactions in the biosynthesis of the cell wall peptidoglycan: transfers peptidoglycan precursor phospho-MurNAc-pentapeptide from UDP-MurNAc-pentapeptide onto the lipid carrier undecaprenyl phosphate, yielding undecaprenyl-pyrophosphoryl-MurNAc-pentapeptide, known as lipid I. In Pseudomonas syringae pv. syringae (strain B728a), this protein is Phospho-N-acetylmuramoyl-pentapeptide-transferase.